We begin with the raw amino-acid sequence, 932 residues long: Serotype-specific antigen 1 (932 aa).

Residues 1–24 (MYKIKHSFNKTLIAISISSFLSIA) form the signal peptide. Residues 25–407 (YATESIENPQ…WGLINLKKAV (383 aa)) enclose the Peptidase S8 domain. Catalysis depends on charge relay system residues D58, H116, and S351. The region spanning 669 to 932 (HTPLQTTVWA…PIWLESKCWL (264 aa)) is the Autotransporter domain.

It belongs to the peptidase S8 family.

It localises to the cell outer membrane. This Mannheimia haemolytica (Pasteurella haemolytica) protein is Serotype-specific antigen 1 (ssa1).